Reading from the N-terminus, the 287-residue chain is Bifunctional protein FolD (287 aa).

NADP(+)-binding positions include 171–173 and Ile237; that span reads GHS.

The protein belongs to the tetrahydrofolate dehydrogenase/cyclohydrolase family. In terms of assembly, homodimer.

It carries out the reaction (6R)-5,10-methylene-5,6,7,8-tetrahydrofolate + NADP(+) = (6R)-5,10-methenyltetrahydrofolate + NADPH. The enzyme catalyses (6R)-5,10-methenyltetrahydrofolate + H2O = (6R)-10-formyltetrahydrofolate + H(+). It participates in one-carbon metabolism; tetrahydrofolate interconversion. Its function is as follows. Catalyzes the oxidation of 5,10-methylenetetrahydrofolate to 5,10-methenyltetrahydrofolate and then the hydrolysis of 5,10-methenyltetrahydrofolate to 10-formyltetrahydrofolate. The sequence is that of Bifunctional protein FolD from Methanosarcina barkeri (strain Fusaro / DSM 804).